Here is a 368-residue protein sequence, read N- to C-terminus: Glutaminyl-peptide cyclotransferase (368 aa).

Residues 1–33 (MARERRDSKAATFFCLAWALCLALPGFPQHVSG) form the signal peptide. N53 carries N-linked (GlcNAc...) asparagine glycosylation. Cysteines 143 and 169 form a disulfide. D164 provides a ligand contact to Zn(2+). The active-site Proton acceptor is the E207. E208 contributes to the Zn(2+) binding site. D254 (proton acceptor) is an active-site residue. A glycan (N-linked (GlcNAc...) asparagine) is linked at N292. H336 lines the Zn(2+) pocket. An N-linked (GlcNAc...) asparagine glycan is attached at N352.

Belongs to the glutaminyl-peptide cyclotransferase family. In terms of tissue distribution, expressed by the venom gland.

It is found in the secreted. The enzyme catalyses N-terminal L-glutaminyl-[peptide] = N-terminal 5-oxo-L-prolyl-[peptide] + NH4(+). In terms of biological role, responsible for the biosynthesis of pyroglutamyl peptides. Has a bias against acidic and tryptophan residues adjacent to the N-terminal glutaminyl residue and a lack of importance of chain length after the second residue. Also catalyzes N-terminal pyroglutamate formation. This chain is Glutaminyl-peptide cyclotransferase (QPCT), found in Gloydius blomhoffii (Mamushi).